We begin with the raw amino-acid sequence, 108 residues long: Glutaredoxin-C10 (108 aa).

The 107-residue stretch at 1–107 folds into the Glutaredoxin domain; it reads MERVAKLASE…PMLKNAGALW (107 aa). Residues cysteine 21 and cysteine 24 are joined by a disulfide bond. The Responsive for interaction with TGA factors motif lies at 105–108; sequence ALWL.

It belongs to the glutaredoxin family. CC-type subfamily.

Its subcellular location is the cytoplasm. It is found in the nucleus. In terms of biological role, has a glutathione-disulfide oxidoreductase activity in the presence of NADPH and glutathione reductase. Reduces low molecular weight disulfides and proteins. In Oryza sativa subsp. japonica (Rice), this protein is Glutaredoxin-C10 (GRXC10).